A 287-amino-acid polypeptide reads, in one-letter code: ATP synthase gamma chain (287 aa).

This sequence belongs to the ATPase gamma chain family. F-type ATPases have 2 components, CF(1) - the catalytic core - and CF(0) - the membrane proton channel. CF(1) has five subunits: alpha(3), beta(3), gamma(1), delta(1), epsilon(1). CF(0) has three main subunits: a, b and c.

Its subcellular location is the cell inner membrane. Its function is as follows. Produces ATP from ADP in the presence of a proton gradient across the membrane. The gamma chain is believed to be important in regulating ATPase activity and the flow of protons through the CF(0) complex. This chain is ATP synthase gamma chain, found in Xylella fastidiosa (strain 9a5c).